The primary structure comprises 312 residues: MEAAARRRQHPGAAGGAGAQPGASFLQARHSSGKADEAVGTAPFHLDLWFYFTLQNWVLDFGRPIAMLVFPLEWFPLNKPSVGDYFHMAYNIITPFLLLKLIERSPRTLPRSVIYVSIITFVMGASIHLVGDSVNHRLLFSGYQHHLSVRENPIIKNLSPETLIDSFELLYYYDEYLGHCMWYVPFFLILFIYFSGCFTPTKAESSMPGAALLLAMPSGLYYWYLVTEGQIFILFIFTFFAMLALVLHQKRKRLFLDSNGLFLFYSFALTLLLVALWVAWLWNDPVLRKKYPGVIYVPEPWAFYTLHVSSRP.

The segment covering 1–10 (MEAAARRRQH) has biased composition (basic residues). The disordered stretch occupies residues 1–22 (MEAAARRRQHPGAAGGAGAQPG). Helical transmembrane passes span 57-77 (WVLD…WFPL), 82-102 (VGDY…LKLI), 112-132 (SVIY…LVGD), 178-198 (GHCM…SGCF), 205-225 (SSMP…YWYL), 226-246 (VTEG…LALV), and 261-281 (LFLF…VAWL).

As to quaternary structure, interacts with CRMP2. Interacts with CLN5. Interacts with CLN5. Interacts with CLN3.

The protein resides in the endoplasmic reticulum membrane. It localises to the endoplasmic reticulum. The polypeptide is Ceroid-lipofuscinosis neuronal protein 6 homolog (CLN6) (Canis lupus familiaris (Dog)).